Reading from the N-terminus, the 397-residue chain is Dual specificity mitogen-activated protein kinase kinase 2 (397 aa).

The tract at residues 1 to 21 (MAPKRRPVPLIIAPTGEGQST) is disordered. Positions 69–366 (FDPICELGAG…LKMLMGHTFI (298 aa)) constitute a Protein kinase domain. ATP-binding positions include 75–83 (LGAGNGGVV) and Lys98. Asp191 (proton acceptor) is an active-site residue. Phosphoserine; by RAF occurs at positions 219 and 223. A disordered region spans residues 284 to 306 (GGAEGHSMSPRQRPPGRPVSGHG).

It belongs to the protein kinase superfamily. STE Ser/Thr protein kinase family. MAP kinase kinase subfamily. Post-translationally, phosphorylation on Ser/Thr by MAP kinase kinase kinases (RAF) positively regulates the kinase activity.

The catalysed reaction is L-seryl-[protein] + ATP = O-phospho-L-seryl-[protein] + ADP + H(+). It catalyses the reaction L-threonyl-[protein] + ATP = O-phospho-L-threonyl-[protein] + ADP + H(+). The enzyme catalyses L-tyrosyl-[protein] + ATP = O-phospho-L-tyrosyl-[protein] + ADP + H(+). Catalyzes the concomitant phosphorylation of a threonine and a tyrosine residue in a Thr-Glu-Tyr sequence located in MAP kinases. This Cyprinus carpio (Common carp) protein is Dual specificity mitogen-activated protein kinase kinase 2 (map2k2).